The primary structure comprises 44 residues: Relaxin (44 aa).

A Pyrrolidone carboxylic acid modification is found at Gln-1. Disulfide bonds link Cys-3–Cys-31, Cys-15–Cys-44, and Cys-30–Cys-35.

Belongs to the insulin family. Heterodimer of a B chain and an A chain linked by two disulfide bonds.

It is found in the secreted. In Carcharias taurus (Sand tiger shark), this protein is Relaxin.